The primary structure comprises 109 residues: Trafficking protein particle complex subunit 2-like protein (109 aa).

Belongs to the TRAPP small subunits family. Sedlin subfamily. In terms of assembly, component of the multisubunit TRAPP (transport protein particle) complex, which includes at least TRAPPC2, TRAPPC2L, TRAPPC3, TRAPPC3L, TRAPPC4, TRAPPC5, TRAPPC8, TRAPPC9, TRAPPC10, TRAPPC11 and TRAPPC12. Interacts with the heterodimer TRAPPC3-TRAPPC6A.

The protein localises to the cytoplasm. It localises to the perinuclear region. It is found in the endoplasmic reticulum. The protein resides in the golgi apparatus. In terms of biological role, may play a role in vesicular transport from endoplasmic reticulum to Golgi. In Pongo abelii (Sumatran orangutan), this protein is Trafficking protein particle complex subunit 2-like protein (TRAPPC2L).